Reading from the N-terminus, the 165-residue chain is Neuropeptide W (165 aa).

A signal peptide spans methionine 1 to alanine 32. Residues alanine 65 to phenylalanine 165 constitute a propeptide that is removed on maturation. The segment at serine 106–phenylalanine 165 is disordered. Residues arginine 113–proline 127 show a composition bias toward low complexity. Serine 133 carries an O-linked (Xyl...) (chondroitin sulfate) serine glycan.

This sequence belongs to the neuropeptide B/W family. As to expression, detected in cerebrospinal fluid and urine (at protein level). Detected at high levels in the substantia nigra, fetal kidney and trachea; at lower levels in testis, uterus, ovary and placenta. Not detectable in many regions of the central nervous system. Also detected at high levels in lymphoblastic leukemia and colorectal adenocarcinoma.

It is found in the secreted. Its function is as follows. Plays a regulatory role in the organization of neuroendocrine signals accessing the anterior pituitary gland. Stimulates water drinking and food intake. May play a role in the hypothalamic response to stress. NPW23 activates GPR7 and GPR8 more efficiently than NPW30. This is Neuropeptide W (NPW) from Homo sapiens (Human).